We begin with the raw amino-acid sequence, 840 residues long: MSKYEFIKIEKKWQEFWDNNKTYKVKEDPNIPKEKRLYILDMFPYPSANGLHVGHPEGYTATDIFGRYKLLNGFHVLHPIGFDSFGLPAENYAIQTGTHPQKSTEENINKFKKQIKALGFAYDWDREIRTHDENYYKWTQWIFLELYKKGLAYAKEMPVWYCPELGTVLANEEIIQTPDGPKSERGFHNVEKKYLRQWVLKITKYAERLLNDLEELEWPESVKEMQRNWIGKSTGVEIDFEIEGHNDKIKVFTTRPDTIFGITYLVIAPESKLIEKITKNNFKRNVLKYVKHEELKSDLKRTSLEKDKSGVFTGSYAFHPITNEKIPIWIGSYVLGTYGSGAVMGVPAHDERDFQFAKKYKLKILPVISKSGKNEILEKAFIDDGISINSPNEFNNLKNSEVKDKVIEWLIKNKKGKEKVTYKLRDWIFSRQRYWGEPIPILFDKLGNAVPLEKNDLPLKLPKTANYKPSRTGESPLSRIKDWVNLKDTGFTRETNTMPQWAGSCWYYLRYLDPKNPKEFASKKKIEYWMPVDLYIGGAEHTVLHLLYSRFWHKVLYDLGYVNTKEPFKKLINQGIITAFSYQKENGILIPNDQVIEKNSKFFDKRDNKEVIQVIAKMSKSLKNVINPDDIIKEFGADSIRIYEMFMGPLTDSKPWNTKGIIGVFRFLNKIWNLREKELSKDNPPKEIISQLHKAIKKVTEDTEKLSFNTAISAMMIFVNELIKYEKNYLNIFKPFIIILSPYAPHLAEELWEYIGETPSLFKNSKWPEFDENLIIKDAKEIVLQINGKMKDKILLSKETDEEELKEIAMGNSKIKANLLNKKIVKIIAIKNKLVNIVIK.

The 'HIGH' region motif lies at 44–55 (PYPSANGLHVGH). Positions 617–621 (KMSKS) match the 'KMSKS' region motif. Residue lysine 620 participates in ATP binding.

It belongs to the class-I aminoacyl-tRNA synthetase family.

Its subcellular location is the cytoplasm. It catalyses the reaction tRNA(Leu) + L-leucine + ATP = L-leucyl-tRNA(Leu) + AMP + diphosphate. This Borrelia garinii subsp. bavariensis (strain ATCC BAA-2496 / DSM 23469 / PBi) (Borreliella bavariensis) protein is Leucine--tRNA ligase.